The following is a 159-amino-acid chain: Small ribosomal subunit protein bS16 (159 aa).

The segment covering 102–119 (GIPEAAEEAPATESVAEA) has biased composition (low complexity). Positions 102 to 159 (GIPEAAEEAPATESVAEAEVADVPESELSEAATETAAAELSPPEAEVEKPQVEEAVEA) are disordered. Over residues 120–129 (EVADVPESEL) the composition is skewed to acidic residues. Positions 130–145 (SEAATETAAAELSPPE) are enriched in low complexity.

It belongs to the bacterial ribosomal protein bS16 family.

This is Small ribosomal subunit protein bS16 from Synechococcus sp. (strain JA-2-3B'a(2-13)) (Cyanobacteria bacterium Yellowstone B-Prime).